The following is a 445-amino-acid chain: Sp110 nuclear body protein (445 aa).

The region spanning 1 to 108 (MFTLTKALEK…IFRSFRNVGY (108 aa)) is the HSR domain. Residues Ser-175 and Ser-177 each carry the phosphoserine modification. The segment at 187–356 (IQEGKTTPVS…VPEKTKNDAV (170 aa)) is disordered. Positions 197–212 (SRDHQRKDKEDSREMP) are enriched in basic and acidic residues. A Phosphoserine modification is found at Ser-226. Residues 245-267 (KKARRKKRPNWSNSKRRRQKKKP) show a composition bias toward basic residues. The short motif at 251–266 (KRPNWSNSKRRRQKKK) is the Nuclear localization signal element. At Ser-277 the chain carries Phosphoserine. Positions 353 to 433 (NDAVDFSPTL…RHLEQKGLLF (81 aa)) constitute an SAND domain.

Detected in lung and macrophages.

The protein resides in the nucleus. May act as a transcription factor. Plays a role in the innate immunity against intracellular pathogens. Required for resistance to M.tuberculosis and L.monocytogenes. Promotes apoptosis of infected cells. In Mus musculus (Mouse), this protein is Sp110 nuclear body protein (Sp110).